Reading from the N-terminus, the 171-residue chain is Shikimate kinase (171 aa).

14-19 (GAGKST) lines the ATP pocket. Ser18 contributes to the Mg(2+) binding site. Asp36, Arg60, and Gly82 together coordinate substrate. ATP is bound at residue Arg120. Arg139 provides a ligand contact to substrate. ATP is bound at residue Gln156.

It belongs to the shikimate kinase family. Monomer. Mg(2+) is required as a cofactor.

Its subcellular location is the cytoplasm. The enzyme catalyses shikimate + ATP = 3-phosphoshikimate + ADP + H(+). It participates in metabolic intermediate biosynthesis; chorismate biosynthesis; chorismate from D-erythrose 4-phosphate and phosphoenolpyruvate: step 5/7. Its function is as follows. Catalyzes the specific phosphorylation of the 3-hydroxyl group of shikimic acid using ATP as a cosubstrate. The sequence is that of Shikimate kinase from Shewanella sp. (strain MR-4).